We begin with the raw amino-acid sequence, 35 residues long: MRIAKIGVIALFLFMALGGIGGVMLAGYTFILRAG.

A helical membrane pass occupies residues 6–26 (IGVIALFLFMALGGIGGVMLA).

The protein belongs to the UPF0387 family.

It localises to the cell inner membrane. The polypeptide is UPF0387 membrane protein YohO (Shigella boydii serotype 4 (strain Sb227)).